The sequence spans 187 residues: Mitochondrial import receptor subunit TOM20-4 (187 aa).

N-acetylmethionine is present on Met-1. The Cytoplasmic segment spans residues 1–160 (MDMQNENERL…QKKTSEFKYD (160 aa)). Residues 84–117 (LSFGFLSSDQTEASDNFEKASQFFQLAVEEQPES) form a TPR repeat. A helical transmembrane segment spans residues 161-178 (VFGWVILASYVVAWISFA). The Mitochondrial intermembrane segment spans residues 179 to 187 (NSQTPVSRQ). The AKR2A-binding sequence (ABS) required for mitochondrion outer membrane targeting signature appears at 179–187 (NSQTPVSRQ).

The protein belongs to the Tom20 family. As to quaternary structure, forms part of the preprotein translocase complex of the outer mitochondrial membrane (TOM complex) which consists of at least 6 different proteins (TOM5, TOM6, TOM7, TOM20, TOM22/TOM9 and TOM40). Interacts with a variety of mitochondrial precursor proteins. Interacts with AKR2A. Component of a mitochondrial large protein complex that contains, at least, MIC60, DGS1, TOM40, TOM20 proteins, and petC/RISP. In terms of processing, the N-terminus is blocked. Expressed in roots, flowers, young cotyledons and leaves.

It is found in the mitochondrion outer membrane. Central component of the receptor complex responsible for the recognition and translocation of cytosolically synthesized mitochondrial preproteins. Together with TOM22 functions as the transit peptide receptor at the surface of the mitochondrion outer membrane and facilitates the movement of preproteins into the translocation pore. The chain is Mitochondrial import receptor subunit TOM20-4 from Arabidopsis thaliana (Mouse-ear cress).